The sequence spans 170 residues: Protein GrpE (170 aa).

A disordered region spans residues 1 to 29 (MSEEIKNEEIVEEVEATEEVVETPEKSEL). Acidic residues predominate over residues 10–22 (IVEEVEATEEVVE).

Belongs to the GrpE family. As to quaternary structure, homodimer.

Its subcellular location is the cytoplasm. In terms of biological role, participates actively in the response to hyperosmotic and heat shock by preventing the aggregation of stress-denatured proteins, in association with DnaK and GrpE. It is the nucleotide exchange factor for DnaK and may function as a thermosensor. Unfolded proteins bind initially to DnaJ; upon interaction with the DnaJ-bound protein, DnaK hydrolyzes its bound ATP, resulting in the formation of a stable complex. GrpE releases ADP from DnaK; ATP binding to DnaK triggers the release of the substrate protein, thus completing the reaction cycle. Several rounds of ATP-dependent interactions between DnaJ, DnaK and GrpE are required for fully efficient folding. This Streptococcus suis (strain 98HAH33) protein is Protein GrpE.